Consider the following 313-residue polypeptide: UDP-N-acetylenolpyruvoylglucosamine reductase (313 aa).

The 177-residue stretch at 31–207 folds into the FAD-binding PCMH-type domain; that stretch reads VGGPADALVA…TGVDLGLGFD (177 aa). The active site involves Arg-180. The active-site Proton donor is Cys-236. The active site involves Glu-307.

It belongs to the MurB family. It depends on FAD as a cofactor.

It is found in the cytoplasm. The enzyme catalyses UDP-N-acetyl-alpha-D-muramate + NADP(+) = UDP-N-acetyl-3-O-(1-carboxyvinyl)-alpha-D-glucosamine + NADPH + H(+). It functions in the pathway cell wall biogenesis; peptidoglycan biosynthesis. In terms of biological role, cell wall formation. In Desulfosudis oleivorans (strain DSM 6200 / JCM 39069 / Hxd3) (Desulfococcus oleovorans), this protein is UDP-N-acetylenolpyruvoylglucosamine reductase.